The primary structure comprises 239 residues: Ribulose-1,5-bisphosphate 5-phosphatase (239 aa).

The Nucleophile role is filled by aspartate 8. Residues aspartate 8, aspartate 10, and aspartate 184 each contribute to the Mg(2+) site. Catalysis depends on aspartate 10, which acts as the Proton donor. Positions 205–239 are disordered; that stretch reads PSEESDATESADRAATERQADHSIDTLGELTDLVS. Residues 214-228 show a composition bias toward basic and acidic residues; sequence SADRAATERQADHSI.

This sequence belongs to the HAD-like hydrolase superfamily. Requires Mg(2+) as cofactor. Mn(2+) serves as cofactor. Co(2+) is required as a cofactor. It depends on Ni(2+) as a cofactor.

The enzyme catalyses D-ribulose 1,5-bisphosphate + H2O = D-ribulose 1-phosphate + phosphate. Requires both monovalent and divalent ions for optimal activity. Optimal KCl concentration is higher than 2.5 M. Its function is as follows. Phosphatase involved in the non-carboxylating pentose bisphosphate pathway, a nucleoside degradation pathway present in some halophilic archaea. Catalyzes the dephosphorylation of ribulose 1,5-bisphosphate (RuBP) to ribulose 1-phosphate (Ru1P). Shows a strict substrate specificity toward RuBP. The protein is Ribulose-1,5-bisphosphate 5-phosphatase of Halopiger xanaduensis (strain DSM 18323 / JCM 14033 / SH-6).